Here is a 312-residue protein sequence, read N- to C-terminus: UDP-N-acetylenolpyruvoylglucosamine reductase (312 aa).

Positions 37–205 (VGGPADALVV…VCAEFALCPG (169 aa)) constitute an FAD-binding PCMH-type domain. The active site involves R185. The active-site Proton donor is S234. Residue E304 is part of the active site.

Belongs to the MurB family. The cofactor is FAD.

It localises to the cytoplasm. It carries out the reaction UDP-N-acetyl-alpha-D-muramate + NADP(+) = UDP-N-acetyl-3-O-(1-carboxyvinyl)-alpha-D-glucosamine + NADPH + H(+). Its pathway is cell wall biogenesis; peptidoglycan biosynthesis. Its function is as follows. Cell wall formation. In Syntrophus aciditrophicus (strain SB), this protein is UDP-N-acetylenolpyruvoylglucosamine reductase.